The primary structure comprises 943 residues: Isoleucine--tRNA ligase (943 aa).

The 'HIGH' region motif lies at 58 to 68 (PYANGSIHIGH). Residue glutamate 567 participates in L-isoleucyl-5'-AMP binding. Residues 608-612 (KMSKS) carry the 'KMSKS' region motif. Residue lysine 611 coordinates ATP. The Zn(2+) site is built by cysteine 906, cysteine 909, cysteine 926, and cysteine 929.

This sequence belongs to the class-I aminoacyl-tRNA synthetase family. IleS type 1 subfamily. As to quaternary structure, monomer. Zn(2+) is required as a cofactor.

The protein resides in the cytoplasm. It catalyses the reaction tRNA(Ile) + L-isoleucine + ATP = L-isoleucyl-tRNA(Ile) + AMP + diphosphate. Its function is as follows. Catalyzes the attachment of isoleucine to tRNA(Ile). As IleRS can inadvertently accommodate and process structurally similar amino acids such as valine, to avoid such errors it has two additional distinct tRNA(Ile)-dependent editing activities. One activity is designated as 'pretransfer' editing and involves the hydrolysis of activated Val-AMP. The other activity is designated 'posttransfer' editing and involves deacylation of mischarged Val-tRNA(Ile). The protein is Isoleucine--tRNA ligase of Pseudomonas aeruginosa (strain UCBPP-PA14).